The sequence spans 403 residues: Aspartic endopeptidase PEP1 (403 aa).

The signal sequence occupies residues 1-20 (MVQISQIGAVLAVCSTLTVA). Residues 21-67 (APTKGKARFNVPQVAVPMKAVHHPAVAYARALHKFGMKVPKAVSDAA) constitute a propeptide, activation peptide. The region spanning 82-400 (YVTQVTVGQG…DTEGPRIGFA (319 aa)) is the Peptidase A1 domain. Asp98 is a catalytic residue. N-linked (GlcNAc...) asparagine glycans are attached at residues Asn159 and Asn270. Asp293 is a catalytic residue. A disulfide bridge connects residues Cys329 and Cys361.

Belongs to the peptidase A1 family.

Its subcellular location is the secreted. The catalysed reaction is Hydrolysis of proteins with broad specificity. Generally favors hydrophobic residues in P1 and P1', but also accepts Lys in P1, which leads to activation of trypsinogen. Does not clot milk.. Its function is as follows. Secreted aspartic endopeptidase that allows assimilation of proteinaceous substrates. Can catalyze hydrolysis of the major structural proteins of basement membrane, elastin, collagen, and laminin. Thought to play a significant role in virulence. Can catalyze hydrolysis of the major structural proteins of basement membrane, elastin, collagen, and laminin. Thought to play a significant role in virulence. The polypeptide is Aspartic endopeptidase PEP1 (PEP1) (Trichophyton verrucosum (strain HKI 0517)).